The primary structure comprises 61 residues: Copper metallothionein 1-1 (61 aa).

The propeptide occupies 1–8 (MFSELINF). Positions 15, 17, 19, 22, and 28 each coordinate Cu cation. Lys30 participates in a covalent cross-link: Glycyl lysine isopeptide (Lys-Gly) (interchain with G-Cter in ubiquitin). Cu cation is bound by residues Cys32, Cys34, Cys38, Cys44, and Cys46. Residues 37-61 (GCNSDDKCPCGNKSEETKKSCCSGK) form a disordered region. Over residues 40–55 (SDDKCPCGNKSEETKK) the composition is skewed to basic and acidic residues.

Belongs to the metallothionein superfamily. Type 12 family.

Its function is as follows. Protects the cell against copper toxicity by tightly chelating copper ions. May also act as a depository for copper designated for the effective transfer into the apo forms of copper proteins. The chain is Copper metallothionein 1-1 (CUP1-1) from Saccharomyces cerevisiae (strain ATCC 204508 / S288c) (Baker's yeast).